Consider the following 416-residue polypeptide: MLTRSILSVAVCGLLLSPLLPITRASQEEDTGKQDKQFTVELDPETFDTAIAGGNVFVKFFAPWCGHCKRIQPLWEQLAEIMNVDNPKVIIAKVDCTKHQGLCATHQVTGYPTLRLFKLGEEESVKFKGTRDLPAITDFINKELSAPAEADLGEVKREQVENLNIGKVVDLTEDTFAKHVSTGNHFVKFFAPWCSHCQRLAPTWEDLAKELIKEPTVTISKIDCTQFRSICQDFEVKGYPTLLWIEDGKKIEKYSGARDLSTLKTYVEKMVGVPLEKTAGEAGDEKVVIEEVAGEEDAAKKLTPQQLTGEDEFDQAIAEGVAFIKFYAPWCGHCQKLQPTWEQLATETHQAQSSVKIAKVDCTAPENKQVCIDQQVEGYPTLFLYKNGQRQNEYEGSRSLPELQAYLKKFLGHDEL.

An N-terminal signal peptide occupies residues 1–25 (MLTRSILSVAVCGLLLSPLLPITRA). Thioredoxin domains follow at residues 26–145 (SQEE…KELS), 150–272 (ADLG…KMVG), and 293–412 (AGEE…KFLG). 3 cysteine pairs are disulfide-bonded: Cys-65–Cys-68, Cys-194–Cys-197, and Cys-331–Cys-334. The Prevents secretion from ER signature appears at 413 to 416 (HDEL).

This sequence belongs to the protein disulfide isomerase family.

It localises to the endoplasmic reticulum. The protein localises to the cell surface. Its function is as follows. Possesses thioredoxin activity. Acts as a ligand for Drpr and is required for the phagocytosis of apoptotic cells. Binds to the extracellular region of Drpr and augments Drpr tyrosine phosphorylation. This Drosophila melanogaster (Fruit fly) protein is Thioredoxin domain-containing protein 5 homolog.